Consider the following 173-residue polypeptide: NAD(P)H-quinone oxidoreductase subunit J (173 aa).

It belongs to the complex I 30 kDa subunit family. As to quaternary structure, NDH-1 can be composed of about 15 different subunits; different subcomplexes with different compositions have been identified which probably have different functions.

It is found in the cellular thylakoid membrane. It carries out the reaction a plastoquinone + NADH + (n+1) H(+)(in) = a plastoquinol + NAD(+) + n H(+)(out). It catalyses the reaction a plastoquinone + NADPH + (n+1) H(+)(in) = a plastoquinol + NADP(+) + n H(+)(out). In terms of biological role, NDH-1 shuttles electrons from an unknown electron donor, via FMN and iron-sulfur (Fe-S) centers, to quinones in the respiratory and/or the photosynthetic chain. The immediate electron acceptor for the enzyme in this species is believed to be plastoquinone. Couples the redox reaction to proton translocation, and thus conserves the redox energy in a proton gradient. Cyanobacterial NDH-1 also plays a role in inorganic carbon-concentration. In Prochlorococcus marinus (strain NATL2A), this protein is NAD(P)H-quinone oxidoreductase subunit J.